A 418-amino-acid chain; its full sequence is Ig-like V-type domain-containing protein FAM187A (418 aa).

The N-terminal stretch at 1-18 (MRLAPTTVLLWAWGSLQA) is a signal peptide. The Extracellular portion of the chain corresponds to 19–376 (FEIVEKENIF…ASLSDPETRT (358 aa)). The 95-residue stretch at 267–361 (PWVPQVPIQF…IAGFRLGVTS (95 aa)) folds into the Ig-like V-type domain. A disulfide bridge links Cys289 with Cys345. Asn317 is a glycosylation site (N-linked (GlcNAc...) asparagine). The chain crosses the membrane as a helical span at residues 377 to 397 (AVELTLIGYLLIAVVFVTIHL). The Cytoplasmic portion of the chain corresponds to 398–418 (CRCCCQSRCCPNFSAQTLLQL).

Belongs to the FAM187 family.

The protein resides in the membrane. In Rattus norvegicus (Rat), this protein is Ig-like V-type domain-containing protein FAM187A (Fam187a).